The chain runs to 330 residues: Ribosomal RNA small subunit methyltransferase A (330 aa).

S-adenosyl-L-methionine-binding residues include His29, Leu31, Gly56, Glu77, and Asp98. Residues 115-158 (PVRSAGLPQAETAPKGLEPAGSSSQQGPRDWLRQTAGAAAPSRG) are disordered. Asn177 serves as a coordination point for S-adenosyl-L-methionine.

It belongs to the class I-like SAM-binding methyltransferase superfamily. rRNA adenine N(6)-methyltransferase family. RsmA subfamily.

The protein localises to the cytoplasm. It carries out the reaction adenosine(1518)/adenosine(1519) in 16S rRNA + 4 S-adenosyl-L-methionine = N(6)-dimethyladenosine(1518)/N(6)-dimethyladenosine(1519) in 16S rRNA + 4 S-adenosyl-L-homocysteine + 4 H(+). Its function is as follows. Specifically dimethylates two adjacent adenosines (A1518 and A1519) in the loop of a conserved hairpin near the 3'-end of 16S rRNA in the 30S particle. May play a critical role in biogenesis of 30S subunits. The polypeptide is Ribosomal RNA small subunit methyltransferase A (Polaromonas sp. (strain JS666 / ATCC BAA-500)).